The following is a 622-amino-acid chain: Kinesin-like protein KIFC1 (622 aa).

The interval 1–88 (MKEALEPAKK…KRPGKRPDWD (88 aa)) is disordered. Over residues 32-41 (SSLSQPQGPT) the composition is skewed to polar residues. The stretch at 95-264 (DLTEELKCYR…QELKGNIRVF (170 aa)) forms a coiled coil. Residues 260–612 (NIRVFCRVRP…LRFASKVNQC (353 aa)) enclose the Kinesin motor domain. The disordered stretch occupies residues 279 to 323 (PGFLLFPHGPAGPSDPPTRLSLSRSDDRRSTLTRAPAPTTRHDFS). Thr309 bears the Phosphothreonine mark. Residue 360–367 (GQTGSGKT) participates in ATP binding.

This sequence belongs to the TRAFAC class myosin-kinesin ATPase superfamily. Kinesin family. NCD subfamily. As to quaternary structure, binds NUBP1 and NUBP2. Interacts with PPP1R42.

It localises to the nucleus. The protein resides in the cytoplasm. Its subcellular location is the cytoskeleton. The protein localises to the microtubule organizing center. It is found in the centrosome. It localises to the spindle. The protein resides in the early endosome. Minus end-directed microtubule-dependent motor required for bipolar spindle formation. May contribute to movement of early endocytic vesicles. Regulates cilium formation and structure. The polypeptide is Kinesin-like protein KIFC1 (Cricetulus griseus (Chinese hamster)).